A 179-amino-acid chain; its full sequence is Disulfide bond formation protein B (179 aa).

At 1–14 the chain is on the cytoplasmic side; it reads MLSYFKELSLRRPA. The chain crosses the membrane as a helical span at residues 15–31; the sequence is WLLLATLACTLEVTGLY. The Periplasmic segment spans residues 32-49; sequence FQHKLGLIPCVMCIYERV. Cysteine 41 and cysteine 44 form a disulfide bridge. The chain crosses the membrane as a helical span at residues 50–65; sequence ALTGLLIAGLIALIAP. The Cytoplasmic portion of the chain corresponds to 66-72; that stretch reads NFFLFRW. The helical transmembrane segment at 73-90 threads the bilayer; it reads LALVLWGFSAFKGLSLSI. Residues 91–146 are Periplasmic-facing; that stretch reads KHYDYQANPSPWNQCEFKPQFPQTIPLDEWFPNIFAAGTVNCSEKQWQMLGWGMPE. A disulfide bridge links cysteine 105 with cysteine 132. Residues 147 to 165 traverse the membrane as a helical segment; sequence WLIVAFSLFMLFFLIVFMS. Over 166-179 the chain is Cytoplasmic; the sequence is QFKRAKPQYRSVFR.

It belongs to the DsbB family.

The protein resides in the cell inner membrane. In terms of biological role, required for disulfide bond formation in some periplasmic proteins. Acts by oxidizing the DsbA protein. This is Disulfide bond formation protein B from Haemophilus ducreyi (strain 35000HP / ATCC 700724).